The primary structure comprises 418 residues: Gamma-glutamyl phosphate reductase (418 aa).

The protein belongs to the gamma-glutamyl phosphate reductase family.

The protein resides in the cytoplasm. The enzyme catalyses L-glutamate 5-semialdehyde + phosphate + NADP(+) = L-glutamyl 5-phosphate + NADPH + H(+). It participates in amino-acid biosynthesis; L-proline biosynthesis; L-glutamate 5-semialdehyde from L-glutamate: step 2/2. Its function is as follows. Catalyzes the NADPH-dependent reduction of L-glutamate 5-phosphate into L-glutamate 5-semialdehyde and phosphate. The product spontaneously undergoes cyclization to form 1-pyrroline-5-carboxylate. The chain is Gamma-glutamyl phosphate reductase from Desulfosudis oleivorans (strain DSM 6200 / JCM 39069 / Hxd3) (Desulfococcus oleovorans).